Consider the following 388-residue polypeptide: Succinate--CoA ligase [ADP-forming] subunit beta (388 aa).

The region spanning 9 to 244 (KELFARRGLP…VTQEDAREAH (236 aa)) is the ATP-grasp domain. ATP contacts are provided by residues K46, 53-55 (GRG), E99, T102, and E107. Mg(2+) is bound by residues N199 and D213. Substrate-binding positions include N264 and 321-323 (GIV).

The protein belongs to the succinate/malate CoA ligase beta subunit family. In terms of assembly, heterotetramer of two alpha and two beta subunits. It depends on Mg(2+) as a cofactor.

It carries out the reaction succinate + ATP + CoA = succinyl-CoA + ADP + phosphate. The enzyme catalyses GTP + succinate + CoA = succinyl-CoA + GDP + phosphate. It functions in the pathway carbohydrate metabolism; tricarboxylic acid cycle; succinate from succinyl-CoA (ligase route): step 1/1. Succinyl-CoA synthetase functions in the citric acid cycle (TCA), coupling the hydrolysis of succinyl-CoA to the synthesis of either ATP or GTP and thus represents the only step of substrate-level phosphorylation in the TCA. The beta subunit provides nucleotide specificity of the enzyme and binds the substrate succinate, while the binding sites for coenzyme A and phosphate are found in the alpha subunit. The sequence is that of Succinate--CoA ligase [ADP-forming] subunit beta from Hamiltonella defensa subsp. Acyrthosiphon pisum (strain 5AT).